The primary structure comprises 449 residues: Guanine/hypoxanthine permease GhxP (449 aa).

The Cytoplasmic portion of the chain corresponds to 1–25; that stretch reads MSTPSARTGGSLDAWFKISQRGSTV. A helical membrane pass occupies residues 26-49; the sequence is RQEVVAGLTTFLAMVYSVIVVPGM. Residues 50-59 are Periplasmic-facing; the sequence is LGKAGFPPAA. A helical transmembrane segment spans residues 60–78; the sequence is VFVATCLVAGLGSIVMGLW. At 79 to 80 the chain is on the cytoplasmic side; it reads AN. The chain crosses the membrane as a discontinuously helical span at residues 81-97; that stretch reads LPLAIGCAISLTAFTAF. The Periplasmic portion of the chain corresponds to 98 to 109; sequence SLVLGQHISVPV. The chain crosses the membrane as a helical span at residues 110–129; that stretch reads ALGAVFLMGVLFTVISATGI. At 130–141 the chain is on the cytoplasmic side; that stretch reads RSWILRNLPHGV. The chain crosses the membrane as a helical span at residues 142-162; that stretch reads AHGTGIGIGLFLLLIAANGVG. Over 163-180 the chain is Periplasmic; sequence LVIKNPLDGLPVALGDFA. Residues 181 to 198 form a helical membrane-spanning segment; the sequence is TFPVIMSLVGLAVIIGLE. The Cytoplasmic segment spans residues 199–202; that stretch reads KLKV. The helical transmembrane segment at 203 to 222 threads the bilayer; it reads PGGILLTIIGISIVGLIFDP. Residues 223 to 254 are Periplasmic-facing; it reads NVHFSGVFAMPSLSDENGNSLIGSLDIMGALN. Residues 255 to 283 traverse the membrane as a helical segment; it reads PVVLPSVLALVMTAVFDATGTIRAVAGQA. At 284–296 the chain is on the cytoplasmic side; it reads NLLDKDGQIIDGG. Residues 297-312 traverse the membrane as a helical segment; that stretch reads KALTTDSMSSVFSGLV. The Periplasmic portion of the chain corresponds to 313–314; it reads GA. A discontinuously helical membrane pass occupies residues 315 to 330; the sequence is APAAVYIESAAGTAAG. Residues 331–334 lie on the Cytoplasmic side of the membrane; the sequence is GKTG. A helical transmembrane segment spans residues 335 to 349; that stretch reads LTAITVGVLFLLILF. Over 350-360 the chain is Periplasmic; sequence LSPLSYLVPGY. The helical transmembrane segment at 361-380 threads the bilayer; sequence ATAPALMYVGLLMLSNVAKI. The Cytoplasmic portion of the chain corresponds to 381 to 385; sequence DFADF. The segment at residues 386–421 is an intramembrane region (discontinuously helical); that stretch reads VDAMAGLVTAVFIVLTCNIVTGIMIGFATLVIGRLV. Residues 422-449 lie on the Cytoplasmic side of the membrane; sequence SGEWRKLNIGTVVIAVALVTFYAGGWAI.

This sequence belongs to the nucleobase:cation symporter-2 (NCS2) (TC 2.A.40) family. Azg-like subfamily.

It localises to the cell inner membrane. Functionally, high-affinity transporter for guanine and hypoxanthine. This Escherichia coli O157:H7 protein is Guanine/hypoxanthine permease GhxP (ghxP).